We begin with the raw amino-acid sequence, 285 residues long: Urease accessory protein UreD 1 (285 aa).

It belongs to the UreD family. UreD, UreF and UreG form a complex that acts as a GTP-hydrolysis-dependent molecular chaperone, activating the urease apoprotein by helping to assemble the nickel containing metallocenter of UreC. The UreE protein probably delivers the nickel.

It localises to the cytoplasm. In terms of biological role, required for maturation of urease via the functional incorporation of the urease nickel metallocenter. The protein is Urease accessory protein UreD 1 of Pseudomonas syringae pv. tomato (strain ATCC BAA-871 / DC3000).